Reading from the N-terminus, the 375-residue chain is uncharacterized protein (375 aa).

Helical transmembrane passes span 21–41, 66–86, 160–180, 203–223, 234–254, 289–309, and 338–358; these read LLLL…IVLF, IIVF…FCVS, LVGV…PGIV, LVGL…HLLI, FYMV…FHLF, VISF…YFLI, and FFLM…MLFF.

The protein resides in the cell membrane. This is an uncharacterized protein from Mycoplasma genitalium (strain ATCC 33530 / DSM 19775 / NCTC 10195 / G37) (Mycoplasmoides genitalium).